The chain runs to 675 residues: MASTVLYNSLTTSTTVFLRSHLPISSSSPNDELHHQSSVISNCNYYLKKSSFGGQRKKLKENNNYVKAAAVAESLKTYPNEVAGDVPEKKLRILVAGGGIGGLVFALAAKKRGFDVKVFEKDLSAIRGEGKYRGPIQVQSNALAALEAIDMDVAEKVLAAGCVTGDRINGLVDGVSGNWYVKFDTFTPAVERGLPVTRVISRMTLQQILAEAVGEEVITNESNVVDFKDDGNKVSVTLDNGKTFEGDLLVGADGIWSKVRTNLFGHSDAVYSGYTCYTGIADYVPADIDSVGYRVFLGNKQYFVSSDVGGGKMQWYAFYKEAPGGVDQPNGMKQRLFDIFEGWCDNVIDVIIATDEEAILRRDIYDRTPKLTWGQGRVTLLGDSVHAMQPNLGQGGCMAIEDSYELALTLDKAWQKSVESGRPIDVASSLKSYEGARRLRVGVIHGLARLAAVMATTYKSYLGIGLGPLSFLTKLRIPHPGRVGGRFFITPAMPLMLRWILGGNSEKLEGRIPYCSLSEKASNNLQRWFEDDDALERALTGEWTLLPQGSVAGSLKPICLSRKEDEPCIIGGVFHKDSSGMSVALSSPQISEKHAQITCKNGAYFVTDLGSEHGTWITDNEGRNYRLPPNFPTRFHPSDVIEFGTDKKAVYRVKVMATPPKASQNSPSAAVLQTA.

The transit peptide at 1 to 25 directs the protein to the chloroplast; sequence MASTVLYNSLTTSTTVFLRSHLPIS. Residues 92–120 and 370–383 each bind FAD; these read RILVAGGGIGGLVFALAAKKRGFDVKVFE and KLTWGQGRVTLLGD. Residues 558–622 form the FHA domain; the sequence is ICLSRKEDEP…HGTWITDNEG (65 aa).

It depends on FAD as a cofactor.

It localises to the plastid. The protein resides in the chloroplast thylakoid membrane. It catalyses the reaction all-trans-zeaxanthin + 4 reduced [2Fe-2S]-[ferredoxin] + 2 O2 + 4 H(+) = all-trans-violaxanthin + 4 oxidized [2Fe-2S]-[ferredoxin] + 2 H2O. The protein operates within plant hormone biosynthesis; abscisate biosynthesis. Its activity is regulated as follows. Inhibited by diphenyleneiodonium (DPI). Its function is as follows. Converts zeaxanthin into antheraxanthin and subsequently violaxanthin. Involved in the epoxidation of zeaxanthin. The protein is Zeaxanthin epoxidase, chloroplastic of Spinacia oleracea (Spinach).